A 117-amino-acid polypeptide reads, in one-letter code: Appetite-regulating hormone (117 aa).

The N-terminal stretch at 1 to 23 is a signal peptide; the sequence is MPSPGTVCSLLLLGMLWLDLAMA. Serine 26 carries the O-decanoyl serine; alternate lipid modification. The O-hexanoyl serine; alternate moiety is linked to residue serine 26. Serine 26 carries the O-octanoyl serine; alternate lipid modification. Residues 29–67 are disordered; it reads SPEHQRAQQRKESKKPPAKLQPRALGGWLRPEDGDQAEG. A compositionally biased stretch (basic and acidic residues) spans 31–43; the sequence is EHQRAQQRKESKK. A propeptide spans 52-75 (removed in mature form); it reads ALGGWLRPEDGDQAEGAEDELEIQ. Leucine amide is present on leucine 98. The propeptide at 99–117 is removed in mature form; it reads GKFLQDILWEEAKEAPADK.

Belongs to the motilin family. Post-translationally, O-octanoylated by GOAT/MBOAT4. O-octanoylation is essential for ghrelin activity. Amidation of Leu-98 is essential for obestatin activity.

It is found in the secreted. Ghrelin is the ligand for growth hormone secretagogue receptor type 1 (GHSR). Induces the release of growth hormone from the pituitary. Has an appetite-stimulating effect, induces adiposity and stimulates gastric acid secretion. Involved in growth regulation. Functionally, obestatin may be the ligand for GPR39. May have an appetite-reducing effect resulting in decreased food intake. May reduce gastric emptying activity and jejunal motility. The chain is Appetite-regulating hormone (GHRL) from Papio hamadryas (Hamadryas baboon).